The chain runs to 430 residues: MALRPEKPVWMSQEQYDRQYGKLEEPKPPREESKPGDQAKPSAEPKSGSEEKTEGSSSSTGQGEERPHFKIQKRRHQNYDLEERKKKQQLNKLREEQLKQHDIEMAANKVVNVDQIVREHYNERTFHAKRYNRNYSPIIKLRNFNNAIKYMLIDKYTRPRDVVLELGCGKGGDLRKYGACEISQFIGIDISNESIREAQRRYLNMRDLDYQVILITGDCFGESLGVAVQPFPECRFPCDVVSTQFCLHYAFETEEKARRAILNVSKSLKVGGFFFGTIPDAEFIRYKLNKFSKEVERPSWGNSIYKVVFANNSYQLNDYEFETPYGNMYTYWLEDAIDNVPEYVIPFETLRNLCDEYGMELEMQKPFNKFFVEEIPQWMNKFSPRLREGLQRSDGKYGVEGDEKEAASYFYTVFAFRKVKDYVENAPAHA.

Positions 1–88 (MALRPEKPVW…YDLEERKKKQ (88 aa)) are disordered. A compositionally biased stretch (basic and acidic residues) spans 15-37 (QYDRQYGKLEEPKPPREESKPGD). Residues 136-419 (SPIIKLRNFN…FYTVFAFRKV (284 aa)) form the mRNA cap 0 methyltransferase domain. 145-146 (NN) is a binding site for mRNA. Residues K149, G167, D189, D218, Q244, and Y249 each contribute to the S-adenosyl-L-methionine site.

The protein belongs to the class I-like SAM-binding methyltransferase superfamily. mRNA cap 0 methyltransferase family.

It localises to the nucleus. The enzyme catalyses a 5'-end (5'-triphosphoguanosine)-ribonucleoside in mRNA + S-adenosyl-L-methionine = a 5'-end (N(7)-methyl 5'-triphosphoguanosine)-ribonucleoside in mRNA + S-adenosyl-L-homocysteine. In terms of biological role, responsible for methylating the 5'-cap structure of mRNAs. The chain is mRNA cap guanine-N(7) methyltransferase (ABD1) from Eremothecium gossypii (strain ATCC 10895 / CBS 109.51 / FGSC 9923 / NRRL Y-1056) (Yeast).